Here is a 357-residue protein sequence, read N- to C-terminus: Gene 58 protein (357 aa).

Belongs to the herpesviridae BMRF2 family.

The chain is Gene 58 protein (58) from Saimiri sciureus (Common squirrel monkey).